We begin with the raw amino-acid sequence, 268 residues long: Nickel import ATP-binding protein NikE (268 aa).

The ABC transporter domain occupies 4-252 (LNVSDLSHHY…SSDAGRVLQN (249 aa)). An ATP-binding site is contributed by 45 to 52 (GRSGCGKS).

It belongs to the ABC transporter superfamily. Nickel importer (TC 3.A.1.5.3) family. As to quaternary structure, the complex is composed of two ATP-binding proteins (NikD and NikE), two transmembrane proteins (NikB and NikC) and a solute-binding protein (NikA).

It is found in the cell inner membrane. The catalysed reaction is Ni(2+)(out) + ATP + H2O = Ni(2+)(in) + ADP + phosphate + H(+). Its function is as follows. Part of the ABC transporter complex NikABCDE involved in nickel import. Responsible for energy coupling to the transport system. The sequence is that of Nickel import ATP-binding protein NikE from Shigella dysenteriae serotype 1 (strain Sd197).